Consider the following 155-residue polypeptide: RNA pyrophosphohydrolase (155 aa).

The Nudix hydrolase domain maps to 6 to 148 (GYRANVAIVL…KQEVYRKALT (143 aa)). Positions 38–59 (GGVATGETPLQAMYRELHEEIG) match the Nudix box motif.

The protein belongs to the Nudix hydrolase family. RppH subfamily. It depends on a divalent metal cation as a cofactor.

In terms of biological role, accelerates the degradation of transcripts by removing pyrophosphate from the 5'-end of triphosphorylated RNA, leading to a more labile monophosphorylated state that can stimulate subsequent ribonuclease cleavage. This is RNA pyrophosphohydrolase from Francisella tularensis subsp. tularensis (strain FSC 198).